A 129-amino-acid polypeptide reads, in one-letter code: MNASISLLCLALLLISPFCLGYSDEERESDSLRVAEIIRTSNDAESKINRTQELLDIFRRLTPTLSPEQREKIERSIQEHTDEILIDGVPSQGGRKTKYVGKILSPVAQGLAVGFFEELGGSLSRLFTG.

The first 21 residues, 1 to 21 (MNASISLLCLALLLISPFCLG), serve as a signal peptide directing secretion.

It belongs to the Turandot family.

The protein localises to the secreted. A humoral factor that may play a role in stress tolerance. The protein is Protein Turandot C of Drosophila melanogaster (Fruit fly).